A 529-amino-acid chain; its full sequence is Keratin, type II cytoskeletal 74 (529 aa).

The head stretch occupies residues 1–139; that stretch reads MSRQLNIKSS…DPEIQKVRAQ (139 aa). The interval 140 to 175 is coil 1A; sequence EREQIKVLNDKFASFIDKVRFLEQQNQVLETKWELL. Residues 140 to 453 form the IF rod domain; sequence EREQIKVLND…KLLEGEECRM (314 aa). The segment at 176–194 is linker 1; that stretch reads QQLDLNNCKKNLEPILEGY. The coil 1B stretch occupies residues 195–286; that stretch reads ISNLRKQLET…CLYDAEIAQI (92 aa). Residues 287 to 310 are linker 12; the sequence is QTHASETSVILSMDNNRDLDLDSI. The interval 311 to 449 is coil 2; the sequence is IAEVRMHYEE…ATYRKLLEGE (139 aa). Positions 450–529 are tail; that stretch reads ECRMSGENPS…ASIPARKATR (80 aa). Low complexity predominate over residues 484-500; the sequence is GASAVAGSSGSTQSGQT. Residues 484–529 form a disordered region; sequence GASAVAGSSGSTQSGQTKTTEARGGDLKDTQGKSTPASIPARKATR. Residues 503–514 show a composition bias toward basic and acidic residues; the sequence is TEARGGDLKDTQ. Threonine 513 bears the Phosphothreonine mark.

This sequence belongs to the intermediate filament family. As to quaternary structure, heterotetramer of two type I and two type II keratins. In terms of tissue distribution, highly expressed in hair follicles from scalp. In hair, it is specifically present in the inner root sheath (IRS) of the hair follicle. Present in the IRS Huxley layer, but not in Henle layer or cuticle of the IRS. In the IRS Huxley layer, it is expressed in specialized Huxley cells, termed 'Fluegelzellen, along the area of differentiated Henle cells (at protein level).

In terms of biological role, has a role in hair formation. Specific component of keratin intermediate filaments in the inner root sheath (IRS) of the hair follicle. In Homo sapiens (Human), this protein is Keratin, type II cytoskeletal 74 (KRT74).